The following is a 205-amino-acid chain: Dephospho-CoA kinase (205 aa).

One can recognise a DPCK domain in the interval 7-205 (IIGITGRIAS…QEIINYERFE (199 aa)). Position 15–20 (15–20 (ASGKDA)) interacts with ATP.

Belongs to the CoaE family.

It localises to the cytoplasm. The enzyme catalyses 3'-dephospho-CoA + ATP = ADP + CoA + H(+). The protein operates within cofactor biosynthesis; coenzyme A biosynthesis; CoA from (R)-pantothenate: step 5/5. In terms of biological role, catalyzes the phosphorylation of the 3'-hydroxyl group of dephosphocoenzyme A to form coenzyme A. This Borrelia garinii subsp. bavariensis (strain ATCC BAA-2496 / DSM 23469 / PBi) (Borreliella bavariensis) protein is Dephospho-CoA kinase.